The chain runs to 242 residues: Ribonuclease 3 (242 aa).

The RNase III domain occupies 10–146 (LQNFNKKFAD…FVGALYLDQG (137 aa)). Position 59 (glutamate 59) interacts with Mg(2+). Aspartate 63 is a catalytic residue. Mg(2+) contacts are provided by aspartate 132 and glutamate 135. Glutamate 135 is a catalytic residue. Residues 172 to 241 (DFKTQFQELI…AEKAYNDMKK (70 aa)) form the DRBM domain. The interval 216–242 (VAKGQGRTKKESEQKAAEKAYNDMKKK) is disordered. Positions 223–242 (TKKESEQKAAEKAYNDMKKK) are enriched in basic and acidic residues.

The protein belongs to the ribonuclease III family. Homodimer. Requires Mg(2+) as cofactor.

It is found in the cytoplasm. It carries out the reaction Endonucleolytic cleavage to 5'-phosphomonoester.. Digests double-stranded RNA. Involved in the processing of primary rRNA transcript to yield the immediate precursors to the large and small rRNAs (23S and 16S). Processes some mRNAs, and tRNAs when they are encoded in the rRNA operon. Processes pre-crRNA and tracrRNA of type II CRISPR loci if present in the organism. This chain is Ribonuclease 3, found in Staphylococcus carnosus (strain TM300).